Consider the following 245-residue polypeptide: Sugar fermentation stimulation protein homolog (245 aa).

It belongs to the SfsA family.

The protein is Sugar fermentation stimulation protein homolog of Yersinia pestis bv. Antiqua (strain Nepal516).